We begin with the raw amino-acid sequence, 222 residues long: UPF0502 protein XCV4380 (222 aa).

It belongs to the UPF0502 family.

This Xanthomonas euvesicatoria pv. vesicatoria (strain 85-10) (Xanthomonas campestris pv. vesicatoria) protein is UPF0502 protein XCV4380.